The primary structure comprises 188 residues: Adenylate kinase (188 aa).

An ATP-binding site is contributed by 12–17 (GVGKGT). The tract at residues 32–61 (STGDIFRSAMANHTELGDKAKSFMDAGNLV) is NMP. AMP is bound by residues threonine 33, arginine 38, 59-61 (NLV), 89-92 (GYPR), and glutamine 96. Positions 130 to 136 (GRGREDD) are LID. Arginine 131 is a binding site for ATP. Arginine 133 and arginine 144 together coordinate AMP. Residue glycine 172 participates in ATP binding.

This sequence belongs to the adenylate kinase family. As to quaternary structure, monomer.

The protein localises to the cytoplasm. It carries out the reaction AMP + ATP = 2 ADP. It functions in the pathway purine metabolism; AMP biosynthesis via salvage pathway; AMP from ADP: step 1/1. Catalyzes the reversible transfer of the terminal phosphate group between ATP and AMP. Plays an important role in cellular energy homeostasis and in adenine nucleotide metabolism. The chain is Adenylate kinase from Oenococcus oeni (strain ATCC BAA-331 / PSU-1).